Reading from the N-terminus, the 216-residue chain is Cytochrome c-type protein Cgr1 (216 aa).

A helical transmembrane segment spans residues 18–38 (WPIVVGVVVVVLIAAGAGFWV). Heme contacts are provided by Cys46, Cys50, His51, Cys95, Cys98, His99, Cys142, Cys147, His148, Cys176, Cys179, His180, Cys190, Cys193, and His194.

This sequence belongs to the multiheme cytochrome c family. In terms of assembly, may form a membrane-associated complex with Cgr2. Post-translationally, binds 5 heme groups per subunit.

The protein localises to the cell membrane. Its function is as follows. Probably transfers electrons from a membrane-associated electron donor (e.g. the membrane quinone pool) to the [4Fe-4S] cluster of the Cgr2 reductase via its covalently bound heme groups. The polypeptide is Cytochrome c-type protein Cgr1 (Eggerthella lenta (strain ATCC 25559 / DSM 2243 / CCUG 17323 / JCM 9979 / KCTC 3265 / NCTC 11813 / VPI 0255 / 1899 B) (Eubacterium lentum)).